Here is a 1020-residue protein sequence, read N- to C-terminus: Sodium/potassium-transporting ATPase subunit alpha-2 (1020 aa).

Positions 1-5 (MGRGA) are excised as a propeptide. The segment at 1–31 (MGRGAGREYSPAATTAENGGGKKKQKEKELD) is disordered. The Cytoplasmic segment spans residues 6-85 (GREYSPAATT…NALTPPPTTP (80 aa)). At Ser-10 the chain carries Phosphoserine. The segment at 80-82 (PPP) is interaction with phosphoinositide-3 kinase. Residues 86–106 (EWVKFCRQLFGGFSILLWIGA) traverse the membrane as a helical segment. The Extracellular portion of the chain corresponds to 107–129 (ILCFLAFGIQAAMEDEPSNDNLY). The chain crosses the membrane as a helical span at residues 130–150 (LGVVLAAVVIVTGCFSYYQEA). The Cytoplasmic portion of the chain corresponds to 151–286 (KSSKIMDSFK…VGRTPIAMEI (136 aa)). Over residues 212–227 (DNSSLTGESEPQTRSP) the composition is skewed to polar residues. Positions 212–231 (DNSSLTGESEPQTRSPEFTH) are disordered. The helical transmembrane segment at 287–306 (EHFIQLITGVAVFLGVSFFV) threads the bilayer. Residues 307–318 (LSLILGYSWLEA) lie on the Extracellular side of the membrane. Residues 319–336 (VIFLIGIIVANVPEGLLA) traverse the membrane as a helical segment. Residues 337–769 (TVTVCLTLTA…EEGRLIFDNL (433 aa)) are Cytoplasmic-facing. Asp-374 acts as the 4-aspartylphosphate intermediate in catalysis. 4 positions are modified to phosphoserine: Ser-439, Ser-450, Ser-496, and Ser-559. Thr-570 is modified (phosphothreonine). Phosphoserine is present on residues Ser-587 and Ser-672. Residues Asp-714 and Asp-718 each contribute to the Mg(2+) site. A helical transmembrane segment spans residues 770–789 (KKSIAYTLTSNIPEITPFLL). The Extracellular portion of the chain corresponds to 790-799 (FIIANIPLPL). The chain crosses the membrane as a helical span at residues 800–820 (GTVTILCIDLGTDMVPAISLA). Over 821–840 (YEAAESDIMKRQPRNPQTDK) the chain is Cytoplasmic. Ser-826 is subject to Phosphoserine. A helical membrane pass occupies residues 841–863 (LVNERLISMAYGQIGMIQALGGF). At 864 to 915 (FTYFVILAENGFLPSRLLGIRLDWDDRSMNDLEDSYGQEWTYEQRKVVEFTC) the chain is on the extracellular side. A helical transmembrane segment spans residues 916–935 (HTAFFASIVVVQWADLIICK). At 936-948 (TRRNSVFQQGMKN) the chain is on the cytoplasmic side. At Ser-940 the chain carries Phosphoserine; by PKA. The chain crosses the membrane as a helical span at residues 949–967 (KILIFGLLEETALAAFLSY). Residues 968–982 (CPGMGVALRMYPLKV) are Extracellular-facing. The chain crosses the membrane as a helical span at residues 983–1003 (TWWFCAFPYSLLIFIYDEVRK). Topologically, residues 1004–1020 (LILRRYPGGWVEKETYY) are cytoplasmic.

It belongs to the cation transport ATPase (P-type) (TC 3.A.3) family. Type IIC subfamily. In terms of assembly, the sodium/potassium-transporting ATPase is composed of a catalytic alpha subunit, an auxiliary non-catalytic beta subunit and an additional regulatory subunit. Interacts with regulatory subunit FXYD1.

It localises to the membrane. The protein resides in the cell membrane. The catalysed reaction is K(+)(out) + Na(+)(in) + ATP + H2O = K(+)(in) + Na(+)(out) + ADP + phosphate + H(+). This is the catalytic component of the active enzyme, which catalyzes the hydrolysis of ATP coupled with the exchange of sodium and potassium ions across the plasma membrane. This action creates the electrochemical gradient of sodium and potassium, providing the energy for active transport of various nutrients. This chain is Sodium/potassium-transporting ATPase subunit alpha-2 (ATP1A2), found in Bos taurus (Bovine).